We begin with the raw amino-acid sequence, 297 residues long: Beta-1,3-galactosyltransferase 5 (297 aa).

At 1–7 (MAFPKMR) the chain is on the cytoplasmic side. The helical; Signal-anchor for type II membrane protein transmembrane segment at 8–28 (LMYVCLLVLGALCVYFSMYSL) threads the bilayer. Over 29–297 (NLFKEQSFVY…KPRTLLDYWQ (269 aa)) the chain is Lumenal. 3 N-linked (GlcNAc...) asparagine glycosylation sites follow: N130, N174, and N231.

The protein belongs to the glycosyltransferase 31 family.

Its subcellular location is the golgi apparatus membrane. It catalyses the reaction a globoside Gb4Cer (d18:1(4E)) + UDP-alpha-D-galactose = a globoside GalGb4Cer (d18:1(4E)) + UDP + H(+). The protein operates within protein modification; protein glycosylation. In terms of biological role, catalyzes the transfer of Gal to GlcNAc-based acceptors with a preference for the core3 O-linked glycan GlcNAc(beta1,3)GalNAc structure. Can use glycolipid LC3Cer as an efficient acceptor. The protein is Beta-1,3-galactosyltransferase 5 (B3GALT5) of Pan troglodytes (Chimpanzee).